The following is a 487-amino-acid chain: Histamine H1 receptor (487 aa).

Over 1-29 (MSLPNSSCLLEDKMCEGNKTTMASPQLMP) the chain is Extracellular. Residues Asn-5 and Asn-18 are each glycosylated (N-linked (GlcNAc...) asparagine). Residues 30 to 50 (LVVVLSTICLVTVGLNLLVLY) form a helical membrane-spanning segment. Residues 51 to 64 (AVRSERKLHTVGNL) lie on the Cytoplasmic side of the membrane. Residues 65-89 (YIVSLSVADLIVGAVVMPMNILYLL) traverse the membrane as a helical segment. Topologically, residues 90 to 97 (MSKWSLGR) are extracellular. A helical membrane pass occupies residues 98-123 (PLCLFWLSMDYVASTASIFSVFILCI). Cysteines 100 and 180 form a disulfide. Positions 107 and 112 each coordinate histamine. Positions 107–112 (DYVAST) are important for agonist binding. Over 124 to 144 (DRYRSVQQPLRYLKYRTKTRA) the chain is Cytoplasmic. A phosphothreonine mark is found at Thr-140 and Thr-142. A helical membrane pass occupies residues 145 to 164 (SATILGAWFLSFLWVIPILG). Residues 165 to 188 (WNHFMQQTSVRREDKCETDFYDVT) are Extracellular-facing. The helical transmembrane segment at 189–211 (WFKVMTAIINFYLPTLLMLWFYA) threads the bilayer. Residue Asn-198 participates in histamine binding. The Cytoplasmic portion of the chain corresponds to 212–416 (KIYKAVRQHC…MNRERKAAKQ (205 aa)). Ser-230 carries the phosphoserine modification. The span at 238–261 (KLRPENPKGDAKKPGKESPWEVLK) shows a compositional bias: basic and acidic residues. The tract at residues 238-291 (KLRPENPKGDAKKPGKESPWEVLKRKPKDAGGGSVLKSPSQTPKEMKSPVVFSQ) is disordered. Thr-279 carries the post-translational modification Phosphothreonine. Ser-344 and Ser-347 each carry phosphoserine. A disordered region spans residues 345–379 (EISEDQMLGDSQSFSRTDSDTTTETAPGKGKLRSG). The segment covering 353 to 369 (GDSQSFSRTDSDTTTET) has biased composition (polar residues). A phosphoserine mark is found at Ser-380, Ser-396, and Ser-398. Residues 417-440 (LGFIMAAFILCWIPYFIFFMVIAF) form a helical membrane-spanning segment. The interval 424-428 (FILCW) is important for agonist binding. Tyr-431 provides a ligand contact to histamine. An intrachain disulfide couples Cys-441 to Cys-444. Over 441–446 (CKNCCN) the chain is Extracellular. A helical transmembrane segment spans residues 447-469 (EHLHMFTIWLGYINSTLNPLIYP). Residues 470-487 (LCNENFKKTFKRILHIRS) lie on the Cytoplasmic side of the membrane.

It belongs to the G-protein coupled receptor 1 family. Phosphorylation at sites in the second and third cytoplasmic loops independently contribute to agonist-induced receptor down-regulation.

The protein resides in the cell membrane. Functionally, G-protein-coupled receptor for histamine, a biogenic amine that functions as an immune modulator and a neurotransmitter. Through the H1 receptor, histamine mediates the contraction of smooth muscles and increases capillary permeability due to contraction of terminal venules. Also mediates neurotransmission in the central nervous system and thereby regulates circadian rhythms, emotional and locomotor activities as well as cognitive functions. The chain is Histamine H1 receptor from Homo sapiens (Human).